A 179-amino-acid polypeptide reads, in one-letter code: Large ribosomal subunit protein uL5 (179 aa).

Belongs to the universal ribosomal protein uL5 family. In terms of assembly, part of the 50S ribosomal subunit; part of the 5S rRNA/L5/L18/L25 subcomplex. Contacts the 5S rRNA and the P site tRNA. Forms a bridge to the 30S subunit in the 70S ribosome.

Its function is as follows. This is one of the proteins that bind and probably mediate the attachment of the 5S RNA into the large ribosomal subunit, where it forms part of the central protuberance. In the 70S ribosome it contacts protein S13 of the 30S subunit (bridge B1b), connecting the 2 subunits; this bridge is implicated in subunit movement. Contacts the P site tRNA; the 5S rRNA and some of its associated proteins might help stabilize positioning of ribosome-bound tRNAs. The protein is Large ribosomal subunit protein uL5 of Carboxydothermus hydrogenoformans (strain ATCC BAA-161 / DSM 6008 / Z-2901).